The primary structure comprises 565 residues: Sulfite reductase [NADPH] hemoprotein beta-component (565 aa).

[4Fe-4S] cluster-binding residues include Cys429, Cys435, Cys474, and Cys478. Cys478 contributes to the siroheme binding site.

The protein belongs to the nitrite and sulfite reductase 4Fe-4S domain family. In terms of assembly, alpha(8)-beta(8). The alpha component is a flavoprotein, the beta component is a hemoprotein. Siroheme serves as cofactor. The cofactor is [4Fe-4S] cluster.

The enzyme catalyses hydrogen sulfide + 3 NADP(+) + 3 H2O = sulfite + 3 NADPH + 4 H(+). The protein operates within sulfur metabolism; hydrogen sulfide biosynthesis; hydrogen sulfide from sulfite (NADPH route): step 1/1. Functionally, component of the sulfite reductase complex that catalyzes the 6-electron reduction of sulfite to sulfide. This is one of several activities required for the biosynthesis of L-cysteine from sulfate. This is Sulfite reductase [NADPH] hemoprotein beta-component from Shewanella baltica (strain OS223).